A 588-amino-acid polypeptide reads, in one-letter code: Sentrin-specific protease 2 (588 aa).

A Nuclear localization signal motif is present at residues 28–31 (KRRR). A Phosphoserine modification is found at serine 32. Positions 47-52 (PAKRPR) match the Nuclear localization signal motif. Residues 72-381 (GFPFQLTTKP…EKEISNALGH (310 aa)) are axin-binding. The segment at 157–184 (EGYNRRPSGRRHSKSNPESSLPWKPQEQ) is disordered. The Nuclear export signal motif lies at 316 to 331 (LEPDLSEEVSARLRLG). A phosphoserine mark is found at serine 332 and serine 343. The protease stretch occupies residues 394 to 558 (LRITRGDIQT…MFTCKYADYI (165 aa)). Active-site residues include histidine 477 and aspartate 494. Cysteine 547 serves as the catalytic Nucleophile.

This sequence belongs to the peptidase C48 family. In terms of assembly, binds to SUMO2 and SUMO3. Interacts with the C-terminal domain of NUP153 via its N-terminus. Interacts with MTA1. Binds to AXIN1. Post-translationally, polyubiquitinated; which leads to proteasomal degradation. Ubiquitous. Highly expressed in brain, lung and testis.

The protein resides in the nucleus. It localises to the nuclear pore complex. The protein localises to the nucleus membrane. Its subcellular location is the cytoplasm. Protease that catalyzes two essential functions in the SUMO pathway. The first is the hydrolysis of an alpha-linked peptide bond at the C-terminal end of the small ubiquitin-like modifier (SUMO) propeptides, SUMO1, SUMO2 and SUMO3 leading to the mature form of the proteins. The second is the deconjugation of SUMO1, SUMO2 and SUMO3 from targeted proteins, by cleaving an epsilon-linked peptide bond between the C-terminal glycine of the mature SUMO and the lysine epsilon-amino group of the target protein. May down-regulate CTNNB1 levels and thereby modulate the Wnt pathway. Deconjugates SUMO2 from MTA1. Plays a dynamic role in adipogenesis by desumoylating and promoting the stabilization of CEBPB. Acts as a regulator of the cGAS-STING pathway by catalyzing desumoylation of CGAS and STING1 during the late phase of viral infection. This is Sentrin-specific protease 2 (Senp2) from Rattus norvegicus (Rat).